A 1509-amino-acid chain; its full sequence is DNA polymerase alpha catalytic subunit (1509 aa).

Residues 1 to 162 are disordered; that stretch reads MNRPKREKKS…KKTKEKKNEI (162 aa). Composition is skewed to basic and acidic residues over residues 21-35 and 42-79; these read EQIKRARDGEKRTDQ and ERKRLEQLKEQETEFDKEERKRKNRDFIEGDSGYRETS. A coiled-coil region spans residues 27–67; that stretch reads RDGEKRTDQLQEEDDERKRLEQLKEQETEFDKEERKRKNRD. Residues 80–123 are compositionally biased toward acidic residues; that stretch reads DNEDEDEDEDDDGDNSDDDYSLDEDDEDGGGDGENNDSDQEEAI. The span at 127-137 shows a compositional bias: basic residues; the sequence is RKKKRQVKKKS. The segment covering 138 to 147 has biased composition (basic and acidic residues); it reads KKDENGEPKV. The segment covering 148–157 has biased composition (basic residues); sequence KTPRVKKTKE. Coiled-coil stretches lie at residues 234–263 and 958–989; these read APDSELDLEKLKEKQLELEKKLEKEALLNK and LHGLVSKRREIKKRMEQEKNKIIKAQYDIQQQ. Cys1328, Cys1331, Cys1355, Cys1358, Cys1389, Cys1392, Cys1406, and Cys1411 together coordinate Zn(2+). A CysA-type zinc finger spans residues 1328 to 1358; the sequence is CPYCGQNNEFTGIVKIDSEGKSESGFDCNQC. The CysB motif signature appears at 1389–1411; sequence CTECEKVSKNYKETSYRCARPQC.

It belongs to the DNA polymerase type-B family.

The protein resides in the nucleus. It carries out the reaction DNA(n) + a 2'-deoxyribonucleoside 5'-triphosphate = DNA(n+1) + diphosphate. Polymerase alpha in a complex with DNA primase is a replicative polymerase. The chain is DNA polymerase alpha catalytic subunit (pola1) from Dictyostelium discoideum (Social amoeba).